The chain runs to 603 residues: Protein regulator of cytokinesis 1 (603 aa).

The interval 1-341 is dimerization; that stretch reads MRRSEVLADE…HLHDAEIVRL (341 aa). 5 coiled-coil regions span residues 34 to 65, 96 to 136, 211 to 246, 272 to 304, and 383 to 463; these read EQRL…RERL, ILQL…DILC, SLEN…IREL, RNAL…LAQF, and GNLL…AEML. The interval 342 to 466 is spectrin-fold; it reads RNYYDVHKEL…QTEAEMLYGS (125 aa). A compositionally biased stretch (basic and acidic residues) spans 447–459; sequence KQERQLKNKKQTE. Residues 447–502 form a disordered region; sequence KQERQLKNKKQTEAEMLYGSTPRTPSKRPGQTPKKSGKMNTTTMSSATPNSSIRPV. The tract at residues 467–603 is unstructured, Arg/Lys rich; sequence TPRTPSKRPG…RILNSTNIQS (137 aa). Thr-470 carries the phosphothreonine; by CDK1 modification. Polar residues predominate over residues 484–499; that stretch reads KMNTTTMSSATPNSSI. Phosphoserine is present on residues Ser-510 and Ser-568. Phosphothreonine is present on Thr-575. The interval 583–603 is disordered; it reads LSKASRSDATSRILNSTNIQS. The span at 589–603 shows a compositional bias: polar residues; that stretch reads SDATSRILNSTNIQS. Residue Thr-599 is modified to Phosphothreonine; by PLK1.

It belongs to the MAP65/ASE1 family. As to quaternary structure, homodimer. Interacts with the C-terminal Rho-GAP domain and the basic region of RACGAP1. The interaction with RACGAP1 inhibits its GAP activity towards CDC42 in vitro, which may be required for maintaining normal spindle morphology. Interacts (via N-terminus) with the C-terminus of CENPE (via C-terminus); the interaction occurs during late mitosis. Interacts (via N-terminus) with KIF4A (via C-terminus); the interaction is required for the progression of mitosis. Interacts (via N-terminus) with KIF23 (via C-terminus); the interaction occurs during late mitosis. Interacts with KIF14 and KIF20A. Interacts with PLK1. Interacts with KIF20B. Interacts with CCDC66. In terms of processing, phosphorylation by CDK1 in early mitosis holds PRC1 in an inactive monomeric state, during the metaphase to anaphase transition, PRC1 is dephosphorylated, promoting interaction with KIF4A, which then translocates PRC1 along mitotic spindles to the plus ends of antiparallel interdigitating microtubules. Dephosphorylation also promotes MT-bundling activity by allowing dimerization. Phosphorylation by CDK1 prevents PLK1-binding: upon degradation of CDK1 at anaphase and dephosphorylation, it is then phosphorylated by PLK1, leading to cytokinesis.

It localises to the nucleus. The protein localises to the cytoplasm. The protein resides in the cytoskeleton. It is found in the spindle pole. Its subcellular location is the midbody. Its function is as follows. Key regulator of cytokinesis that cross-links antiparrallel microtubules at an average distance of 35 nM. Essential for controlling the spatiotemporal formation of the midzone and successful cytokinesis. Required for KIF14 localization to the central spindle and midbody. Required to recruit PLK1 to the spindle. Stimulates PLK1 phosphorylation of RACGAP1 to allow recruitment of ECT2 to the central spindle. Acts as an oncogene for promoting bladder cancer cells proliferation, apoptosis inhibition and carcinogenic progression. This is Protein regulator of cytokinesis 1 from Mus musculus (Mouse).